A 168-amino-acid polypeptide reads, in one-letter code: MRTQSLKPYHANYHSLTTNDSPTRVDAPTDSGLISEFVYSENQPVVTQLLLPLLQQLSKQSRWLLWLTPQQKLSRSWLKQSGLPINKVVQLRQINPLSTVEAMEKALLTGNYSVVLGWLPELTEDDRIRLRLAAKLGNAYGFVMRPLNDTKVGSGQCATLKIHSYLYH.

Positions 106-112 (ALLTGNY) are ftsZ binding. A lon protease binding region spans residues 161 to 168 (KIHSYLYH).

Belongs to the SulA family. Interacts with FtsZ. Post-translationally, is rapidly cleaved and degraded by the Lon protease once DNA damage is repaired.

Its function is as follows. Component of the SOS system and an inhibitor of cell division. Accumulation of SulA causes rapid cessation of cell division and the appearance of long, non-septate filaments. In the presence of GTP, binds a polymerization-competent form of FtsZ in a 1:1 ratio, thus inhibiting FtsZ polymerization and therefore preventing it from participating in the assembly of the Z ring. This mechanism prevents the premature segregation of damaged DNA to daughter cells during cell division. The polypeptide is Cell division inhibitor SulA (Yersinia pestis bv. Antiqua (strain Antiqua)).